Reading from the N-terminus, the 402-residue chain is Enoyl-[acyl-carrier-protein] reductase [NADH] (402 aa).

Residues 48-53 (GASSGY), 74-75 (FE), 111-112 (DA), and 140-141 (LA) contribute to the NAD(+) site. Tyr226 provides a ligand contact to substrate. Tyr236 functions as the Proton donor in the catalytic mechanism. NAD(+) is bound by residues Lys245 and 274–276 (VVT).

Belongs to the TER reductase family. Monomer.

It catalyses the reaction a 2,3-saturated acyl-[ACP] + NAD(+) = a (2E)-enoyl-[ACP] + NADH + H(+). The protein operates within lipid metabolism; fatty acid biosynthesis. Involved in the final reduction of the elongation cycle of fatty acid synthesis (FAS II). Catalyzes the reduction of a carbon-carbon double bond in an enoyl moiety that is covalently linked to an acyl carrier protein (ACP). The polypeptide is Enoyl-[acyl-carrier-protein] reductase [NADH] (Xanthomonas campestris pv. campestris (strain 8004)).